A 708-amino-acid polypeptide reads, in one-letter code: Solute carrier family 15 member 1 (708 aa).

A helical membrane pass occupies residues Met1–Val21. The Extracellular segment spans residues Asn22 to Thr53. An N-linked (GlcNAc...) asparagine glycan is attached at Asn50. A helical membrane pass occupies residues Ala54–Ala74. The Cytoplasmic portion of the chain corresponds to Asp75 to Lys82. Residues Thr83–Ile103 form a helical membrane-spanning segment. Over Asn104–Leu118 the chain is Extracellular. N-linked (GlcNAc...) asparagine glycosylation occurs at Asn117. The chain crosses the membrane as a helical span at residues Ser119–Ile139. Residues Lys140–Arg161 lie on the Cytoplasmic side of the membrane. Residues Phe162 to Pro182 traverse the membrane as a helical segment. The Extracellular portion of the chain corresponds to Met183–Tyr198. The helical transmembrane segment at Pro199–Gly219 threads the bilayer. Over Ser220–Gln276 the chain is Cytoplasmic. The chain crosses the membrane as a helical span at residues Ile277–Phe297. Residues Asp298 to Thr327 lie on the Extracellular side of the membrane. A helical membrane pass occupies residues Val328–Ile348. Topologically, residues Ala349–Met361 are cytoplasmic. The helical transmembrane segment at Thr362–Ile382 threads the bilayer. The Extracellular segment spans residues Asp383–Leu584. Residues Asp383–Gln585 are extracellular domain (ECD). Residues Asn408, Asn439, Asn495, Asn499, Asn509, Asn514, Asn527, and Asn539 are each glycosylated (N-linked (GlcNAc...) asparagine). A helical membrane pass occupies residues Gln585 to Glu605. Over Phe606 to Leu619 the chain is Cytoplasmic. Residues Gln620–Ala640 form a helical membrane-spanning segment. Residues Gly641–Glu645 lie on the Extracellular side of the membrane. A helical transmembrane segment spans residues Gln646–Ile666. The Cytoplasmic segment spans residues Met667–Met708.

This sequence belongs to the major facilitator superfamily. Proton-dependent oligopeptide transporter (POT/PTR) (TC 2.A.17) family. Interacts (via extracellular domain region) with trypsin.

It localises to the apical cell membrane. It carries out the reaction a dipeptide(out) + H(+)(out) = a dipeptide(in) + H(+)(in). The catalysed reaction is an L-amino acid tripeptide(out) + H(+)(out) = an L-amino acid tripeptide(in) + H(+)(in). The enzyme catalyses L-alanyl-L-lysine(out) + H(+)(out) = L-alanyl-L-lysine(in) + H(+)(in). It catalyses the reaction L-alanyl-L-proline(out) + H(+)(out) = L-alanyl-L-proline(in) + H(+)(in). It carries out the reaction L-alanyl-L-valine(out) + H(+)(out) = L-alanyl-L-valine(in) + H(+)(in). The catalysed reaction is carnosine(out) + H(+)(out) = carnosine(in) + H(+)(in). The enzyme catalyses glycyl-L-glutamine(out) + H(+)(out) = glycyl-L-glutamine(in) + H(+)(in). It catalyses the reaction glycyl-L-leucine(out) + H(+)(out) = glycyl-L-leucine(in) + H(+)(in). It carries out the reaction glycyl-L-proline(out) + H(+)(out) = glycyl-L-proline(in) + H(+)(in). The catalysed reaction is glycyl-sarcosine(out) + H(+)(out) = glycyl-sarcosine(in) + H(+)(in). The enzyme catalyses L-leucyl-L-leucine(out) + H(+)(out) = L-leucyl-L-leucine(in) + H(+)(in). It catalyses the reaction L-leucyl-L-proline(out) + H(+)(out) = L-leucyl-L-proline(in) + H(+)(in). It carries out the reaction L-phenylalanyl-L-leucine(out) + H(+)(out) = L-phenylalanyl-L-leucine(in) + H(+)(in). The catalysed reaction is L-phenylalanyl-L-phenylalanine(out) + H(+)(out) = L-phenylalanyl-L-phenylalanine(in) + H(+)(in). The enzyme catalyses L-lysyl-glycine(out) + H(+)(out) = L-lysyl-glycine(in) + H(+)(in). It catalyses the reaction L-tyrosylglycine(out) + H(+)(out) = L-tyrosylglycine(in) + H(+)(in). It carries out the reaction L-alanyl-L-aspartate(out) + 2 H(+)(out) = L-alanyl-L-aspartate(in) + 2 H(+)(in). The catalysed reaction is L-aspartyl-glycine(out) + 2 H(+)(out) = L-aspartyl-glycine(in) + 2 H(+)(in). The enzyme catalyses glycyl-L-aspartate(out) + 2 H(+)(out) = glycyl-L-aspartate(in) + 2 H(+)(in). It catalyses the reaction glycyl-L-glutamate(out) + 2 H(+)(out) = glycyl-L-glutamate(in) + 2 H(+)(in). It carries out the reaction L-alanyl-L-leucyl-L-alanine(out) + H(+)(out) = L-alanyl-L-leucyl-L-alanine(in) + H(+)(in). The catalysed reaction is L-alanyl-L-prolylglycine(out) + H(+)(out) = L-alanyl-L-prolylglycine(in) + H(+)(in). The enzyme catalyses glycylglycyl-L-isoleucine(out) + H(+)(out) = glycylglycyl-L-isoleucine(in) + H(+)(in). It catalyses the reaction glycylglycyl-L-proline(out) + H(+)(out) = glycylglycyl-L-proline(in) + H(+)(in). It carries out the reaction L-methionyl-L-phenylalanyl-L-methionine(out) + H(+)(out) = L-methionyl-L-phenylalanyl-L-methionine(in) + H(+)(in). The catalysed reaction is N-acetyl-D-muramoyl-L-alanyl-D-isoglutamine(out) + 2 H(+)(out) = N-acetyl-D-muramoyl-L-alanyl-D-isoglutamine(in) + 2 H(+)(in). The enzyme catalyses N(alpha)-formyl-L-methionyl-L-leucyl-L-phenylalanine(out) + 2 H(+)(out) = N(alpha)-formyl-L-methionyl-L-leucyl-L-phenylalanine(in) + 2 H(+)(in). Electrogenic proton-coupled amino-acid transporter that transports oligopeptides of 2 to 4 amino acids with a preference for dipeptides. Transports neutral and monovalently charged peptides with a proton to peptide stoichiometry of 1:1 or 2:1. Primarily responsible for the absorption of dietary di- and tripeptides from the small intestinal lumen. Mediates transepithelial transport of muramyl and N-formylated bacterial dipeptides contributing to recognition of pathogenic bacteria by the mucosal immune system. The sequence is that of Solute carrier family 15 member 1 (SLC15A1) from Canis lupus familiaris (Dog).